The following is a 591-amino-acid chain: Aspartate--tRNA(Asp/Asn) ligase (591 aa).

Residue Glu174 coordinates L-aspartate. The segment at 198–201 (QLFK) is aspartate. Arg220 lines the L-aspartate pocket. Residues 220–222 (RDE) and Gln229 each bind ATP. His450 is an L-aspartate binding site. Glu483 contacts ATP. Arg490 provides a ligand contact to L-aspartate. ATP is bound at residue 535–538 (GLDR).

It belongs to the class-II aminoacyl-tRNA synthetase family. Type 1 subfamily. Homodimer.

The protein localises to the cytoplasm. The catalysed reaction is tRNA(Asx) + L-aspartate + ATP = L-aspartyl-tRNA(Asx) + AMP + diphosphate. Aspartyl-tRNA synthetase with relaxed tRNA specificity since it is able to aspartylate not only its cognate tRNA(Asp) but also tRNA(Asn). Reaction proceeds in two steps: L-aspartate is first activated by ATP to form Asp-AMP and then transferred to the acceptor end of tRNA(Asp/Asn). The protein is Aspartate--tRNA(Asp/Asn) ligase of Azotobacter vinelandii (strain DJ / ATCC BAA-1303).